The sequence spans 346 residues: DNA-directed RNA polymerase subunit alpha (346 aa).

The tract at residues 1 to 233 (MLRDEVAVSA…DLFIPFLHAE (233 aa)) is alpha N-terminal domain (alpha-NTD). Residues 268-346 (IELKCIFIDQ…NKFLIGNPSE (79 aa)) form an alpha C-terminal domain (alpha-CTD) region.

This sequence belongs to the RNA polymerase alpha chain family. In terms of assembly, in plastids the minimal PEP RNA polymerase catalytic core is composed of four subunits: alpha, beta, beta', and beta''. When a (nuclear-encoded) sigma factor is associated with the core the holoenzyme is formed, which can initiate transcription.

Its subcellular location is the plastid. It is found in the chloroplast. The enzyme catalyses RNA(n) + a ribonucleoside 5'-triphosphate = RNA(n+1) + diphosphate. DNA-dependent RNA polymerase catalyzes the transcription of DNA into RNA using the four ribonucleoside triphosphates as substrates. The polypeptide is DNA-directed RNA polymerase subunit alpha (Ranunculus macranthus (Large buttercup)).